Reading from the N-terminus, the 671-residue chain is Anaphase-promoting complex subunit cut9 (671 aa).

The interval methionine 1–alanine 24 is disordered. 14 TPR repeats span residues arginine 83–threonine 114, proline 117–lysine 142, serine 150–leucine 173, leucine 198–valine 229, tyrosine 234–lysine 257, alanine 268–serine 296, aspartate 306–isoleucine 334, valine 341–arginine 368, alanine 373–methionine 402, glycine 407–arginine 435, leucine 442–leucine 470, proline 475–lysine 507, lysine 513–leucine 545, and alanine 550–isoleucine 579. The tract at residues asparagine 622–valine 643 is disordered.

The APC/C is composed of at least 13 subunits: apc1, apc2, nuc2, apc4, apc5, cut9, apc8, apc10, apc11, hcn1, apc13, apc14 and apc15. Homodimer. Interacts directly with nuc2 and hcn1. Phosphorylated.

Its subcellular location is the nucleus. Its function is as follows. Component of the anaphase-promoting complex/cyclosome (APC/C), a cell cycle-regulated E3 ubiquitin-protein ligase complex that controls progression through mitosis and the G1 phase of the cell cycle. The APC/C is thought to confer substrate specificity and, in the presence of ubiquitin-conjugating E2 enzymes, it catalyzes the formation of protein-ubiquitin conjugates that are subsequently degraded by the 26S proteasome. May play a pivotal role in the control of anaphase. This is Anaphase-promoting complex subunit cut9 (cut9) from Schizosaccharomyces pombe (strain 972 / ATCC 24843) (Fission yeast).